The following is a 707-amino-acid chain: Polyribonucleotide nucleotidyltransferase (707 aa).

Aspartate 487 and aspartate 493 together coordinate Mg(2+). The KH domain occupies 554-613; that stretch reads PSMATIKIDPDKIRDVIGKGGATIRKICDDTGASIDLDDDGTVRIYAEDKTAAKAAIDTV. Positions 623–691 constitute an S1 motif domain; sequence GKLYRGTVAR…NRNRVKLSIK (69 aa).

It belongs to the polyribonucleotide nucleotidyltransferase family. As to quaternary structure, component of the RNA degradosome, which is a multiprotein complex involved in RNA processing and mRNA degradation. The cofactor is Mg(2+).

It is found in the cytoplasm. It catalyses the reaction RNA(n+1) + phosphate = RNA(n) + a ribonucleoside 5'-diphosphate. Functionally, involved in mRNA degradation. Catalyzes the phosphorolysis of single-stranded polyribonucleotides processively in the 3'- to 5'-direction. This is Polyribonucleotide nucleotidyltransferase from Chromohalobacter salexigens (strain ATCC BAA-138 / DSM 3043 / CIP 106854 / NCIMB 13768 / 1H11).